Reading from the N-terminus, the 205-residue chain is uncharacterized protein (205 aa).

It to M.jannaschii MJ0638 and MJ1252 and M.tuberculosis Rv2003c.

This is an uncharacterized protein from Methanocaldococcus jannaschii (strain ATCC 43067 / DSM 2661 / JAL-1 / JCM 10045 / NBRC 100440) (Methanococcus jannaschii).